We begin with the raw amino-acid sequence, 85 residues long: Putative membrane protein insertion efficiency factor (85 aa).

Residues 62–85 are disordered; sequence PLGSDGYDPVPEPKDRKPPHSPAG.

This sequence belongs to the UPF0161 family.

It localises to the cell inner membrane. Could be involved in insertion of integral membrane proteins into the membrane. This chain is Putative membrane protein insertion efficiency factor, found in Ruegeria pomeroyi (strain ATCC 700808 / DSM 15171 / DSS-3) (Silicibacter pomeroyi).